The sequence spans 221 residues: Large ribosomal subunit protein uL3 (221 aa).

This sequence belongs to the universal ribosomal protein uL3 family. Part of the 50S ribosomal subunit. Forms a cluster with proteins L14 and L19.

Functionally, one of the primary rRNA binding proteins, it binds directly near the 3'-end of the 23S rRNA, where it nucleates assembly of the 50S subunit. This Chlamydia muridarum (strain MoPn / Nigg) protein is Large ribosomal subunit protein uL3.